We begin with the raw amino-acid sequence, 207 residues long: Uridine kinase (207 aa).

An ATP-binding site is contributed by 11-18; that stretch reads GGSGSGKT.

The protein belongs to the uridine kinase family.

The protein localises to the cytoplasm. It carries out the reaction uridine + ATP = UMP + ADP + H(+). The catalysed reaction is cytidine + ATP = CMP + ADP + H(+). It participates in pyrimidine metabolism; CTP biosynthesis via salvage pathway; CTP from cytidine: step 1/3. The protein operates within pyrimidine metabolism; UMP biosynthesis via salvage pathway; UMP from uridine: step 1/1. In Staphylococcus aureus (strain Mu3 / ATCC 700698), this protein is Uridine kinase.